Reading from the N-terminus, the 426-residue chain is Gamma-glutamyl phosphate reductase (426 aa).

Belongs to the gamma-glutamyl phosphate reductase family.

It localises to the cytoplasm. The catalysed reaction is L-glutamate 5-semialdehyde + phosphate + NADP(+) = L-glutamyl 5-phosphate + NADPH + H(+). The protein operates within amino-acid biosynthesis; L-proline biosynthesis; L-glutamate 5-semialdehyde from L-glutamate: step 2/2. Its function is as follows. Catalyzes the NADPH-dependent reduction of L-glutamate 5-phosphate into L-glutamate 5-semialdehyde and phosphate. The product spontaneously undergoes cyclization to form 1-pyrroline-5-carboxylate. This is Gamma-glutamyl phosphate reductase from Ralstonia pickettii (strain 12J).